The primary structure comprises 143 residues: MFINEYFHNIDSKGRVIMPSKFRDEIGEEFYITKGMDECLFVYPVSAFIQMTEKLNKLSLTRRQARAFSRVFFSGASNQEIDKQGRFLIPQSLRSYADIKKEVAIIGVSNRIEIWDKEKWEQYSNDSSLNYDDLADGLNDLDL.

2 consecutive SpoVT-AbrB domains span residues 5–47 (EYFH…PVSA) and 76–119 (ASNQ…DKEK).

The protein belongs to the MraZ family. Forms oligomers.

It localises to the cytoplasm. The protein resides in the nucleoid. This is Transcriptional regulator MraZ from Finegoldia magna (strain ATCC 29328 / DSM 20472 / WAL 2508) (Peptostreptococcus magnus).